A 295-amino-acid chain; its full sequence is Indole-3-glycerol phosphate synthase (295 aa).

This sequence belongs to the TrpC family.

The catalysed reaction is 1-(2-carboxyphenylamino)-1-deoxy-D-ribulose 5-phosphate + H(+) = (1S,2R)-1-C-(indol-3-yl)glycerol 3-phosphate + CO2 + H2O. It participates in amino-acid biosynthesis; L-tryptophan biosynthesis; L-tryptophan from chorismate: step 4/5. In Prochlorococcus marinus (strain MIT 9515), this protein is Indole-3-glycerol phosphate synthase.